The following is a 261-amino-acid chain: Phosphatidylglycerol--prolipoprotein diacylglyceryl transferase (261 aa).

A run of 7 helical transmembrane segments spans residues 19-39 (VHWY…LALY), 56-76 (LIFY…MLFY), 92-112 (WRGG…TWIF), 126-146 (FVVP…FING), 173-193 (QLYE…WFSA), 199-219 (FAVS…AEFF), and 227-247 (GFVA…MIII). Arg-139 is a binding site for a 1,2-diacyl-sn-glycero-3-phospho-(1'-sn-glycerol).

This sequence belongs to the Lgt family.

It is found in the cell inner membrane. It carries out the reaction L-cysteinyl-[prolipoprotein] + a 1,2-diacyl-sn-glycero-3-phospho-(1'-sn-glycerol) = an S-1,2-diacyl-sn-glyceryl-L-cysteinyl-[prolipoprotein] + sn-glycerol 1-phosphate + H(+). The protein operates within protein modification; lipoprotein biosynthesis (diacylglyceryl transfer). Catalyzes the transfer of the diacylglyceryl group from phosphatidylglycerol to the sulfhydryl group of the N-terminal cysteine of a prolipoprotein, the first step in the formation of mature lipoproteins. This chain is Phosphatidylglycerol--prolipoprotein diacylglyceryl transferase, found in Coxiella burnetii (strain Dugway 5J108-111).